Reading from the N-terminus, the 311-residue chain is D-alanine--D-alanine ligase (311 aa).

Residues 105-306 form the ATP-grasp domain; it reads KQLYIHAGLP…FSALLDRLIE (202 aa). Residue 133 to 188 coordinates ATP; sequence ADRLGLPVVVKPEHEGSSIGLSIVRNRDQLAAAVETGWQYDRRCLIEKYVHGIEIT. Mg(2+)-binding residues include Asp261, Glu273, and Asn275.

Belongs to the D-alanine--D-alanine ligase family. Requires Mg(2+) as cofactor. The cofactor is Mn(2+).

The protein localises to the cytoplasm. The enzyme catalyses 2 D-alanine + ATP = D-alanyl-D-alanine + ADP + phosphate + H(+). The protein operates within cell wall biogenesis; peptidoglycan biosynthesis. Cell wall formation. This Syntrophobacter fumaroxidans (strain DSM 10017 / MPOB) protein is D-alanine--D-alanine ligase.